Reading from the N-terminus, the 564-residue chain is MVRVRIRSPSWYDGVDNAPHRVYLRAVGFTEEDFSKPLVGVAVSWSELGPCNYHTLELARYVKEGVKEAGGAALAAPTIVVNDGINMGTPGMRYSLISRELIADSIEAQFNAHGVDAWVGIGGCDKTQPGIIMAMVRLNLPSVYLYGGSAEAGWLGERELTVEDVFEAVGAYYAGRITLEELKRVEELSFPTYGTCQGMFTANTMALLAEAMGVSLLGSATPPATSARRRKFAVESGKAAVRALELGIKPRDVVTYDALYNAAVALFATAGSTNAILHLLAIAHEAGVKFALEDFDKIGKRVPVIAALRPAGPYAMQDLDRVGGVPRLLKKLYKAGLLRGEALTVEGEPIGKLLERWEPPAVPEAGVLYDVDRPYKPHGGIRILWGNLAPRGAVMKIGAAEVLKFEGKALVFDGEAEAFKAVAAGEVKPGHVVVIRYEGPKGAPGMPEMLKVTAAIVGAGLGESVALVTDGRFSGATRGIMVGHVAPEAAAGGPIALVENGDRIVIDGEAGLLKLDVSDEELERRRRQWTPPPPKYKGGLLAKYAALVSQADQGAVTTPETCQC.

Cys-51 serves as a coordination point for [2Fe-2S] cluster. Asp-83 lines the Mg(2+) pocket. [2Fe-2S] cluster is bound at residue Cys-124. Mg(2+) contacts are provided by Asp-125 and Lys-126. Lys-126 carries the post-translational modification N6-carboxylysine. Residue Cys-196 participates in [2Fe-2S] cluster binding. Glu-448 is a Mg(2+) binding site. Ser-474 acts as the Proton acceptor in catalysis.

This sequence belongs to the IlvD/Edd family. In terms of assembly, homodimer. [2Fe-2S] cluster serves as cofactor. Requires Mg(2+) as cofactor.

It carries out the reaction (2R)-2,3-dihydroxy-3-methylbutanoate = 3-methyl-2-oxobutanoate + H2O. It catalyses the reaction (2R,3R)-2,3-dihydroxy-3-methylpentanoate = (S)-3-methyl-2-oxopentanoate + H2O. It functions in the pathway amino-acid biosynthesis; L-isoleucine biosynthesis; L-isoleucine from 2-oxobutanoate: step 3/4. The protein operates within amino-acid biosynthesis; L-valine biosynthesis; L-valine from pyruvate: step 3/4. Functionally, functions in the biosynthesis of branched-chain amino acids. Catalyzes the dehydration of (2R,3R)-2,3-dihydroxy-3-methylpentanoate (2,3-dihydroxy-3-methylvalerate) into 2-oxo-3-methylpentanoate (2-oxo-3-methylvalerate) and of (2R)-2,3-dihydroxy-3-methylbutanoate (2,3-dihydroxyisovalerate) into 2-oxo-3-methylbutanoate (2-oxoisovalerate), the penultimate precursor to L-isoleucine and L-valine, respectively. The protein is Dihydroxy-acid dehydratase of Pyrobaculum calidifontis (strain DSM 21063 / JCM 11548 / VA1).